The sequence spans 229 residues: Large ribosomal subunit protein uL1 (229 aa).

Belongs to the universal ribosomal protein uL1 family. In terms of assembly, part of the 50S ribosomal subunit.

Its function is as follows. Binds directly to 23S rRNA. The L1 stalk is quite mobile in the ribosome, and is involved in E site tRNA release. In terms of biological role, protein L1 is also a translational repressor protein, it controls the translation of the L11 operon by binding to its mRNA. This is Large ribosomal subunit protein uL1 from Clostridium botulinum (strain Loch Maree / Type A3).